The following is a 568-amino-acid chain: Putative U-box domain-containing protein 55 (568 aa).

Residues 217–464 (QSESDRNDQL…KVAAEKDAAS (248 aa)) are a coiled coil. The U-box domain maps to 496–568 (QPPSYFICPI…AIQEWLQRNS (73 aa)).

The enzyme catalyses S-ubiquitinyl-[E2 ubiquitin-conjugating enzyme]-L-cysteine + [acceptor protein]-L-lysine = [E2 ubiquitin-conjugating enzyme]-L-cysteine + N(6)-ubiquitinyl-[acceptor protein]-L-lysine.. It functions in the pathway protein modification; protein ubiquitination. Functions as an E3 ubiquitin ligase. This chain is Putative U-box domain-containing protein 55 (PUB55), found in Arabidopsis thaliana (Mouse-ear cress).